The sequence spans 258 residues: MTELKQSIQPIGIFFNAQYPSLEAICQRWGLVFDKEAAFELVFENNCLVLNKRDEPKLKGISVDFVSGAVAHRRKFGGGRGQSIAKAVGLKQGVNPSVVDGTAGLGRDAFVLASLGCNVTMVERNPVVAALLEDGLRRAYESEEIGDWMRERMRLVHGSSLESVAELGEEIDVVYLDPMYPHREKSALVKKEMRVFQSLVGADLDADGLLAPATALATKRVVVKRPDYAEDLDGVKPSMVISTKKNRFDVYVKAAMKA.

Residues 107–108 (RD), 123–124 (ER), 159–160 (SS), and Asp177 each bind S-adenosyl-L-methionine.

Belongs to the methyltransferase superfamily. RsmJ family.

It is found in the cytoplasm. It catalyses the reaction guanosine(1516) in 16S rRNA + S-adenosyl-L-methionine = N(2)-methylguanosine(1516) in 16S rRNA + S-adenosyl-L-homocysteine + H(+). Its function is as follows. Specifically methylates the guanosine in position 1516 of 16S rRNA. The polypeptide is Ribosomal RNA small subunit methyltransferase J (Shewanella sediminis (strain HAW-EB3)).